The following is a 2211-amino-acid chain: Activating signal cointegrator 1 complex subunit 3 (2211 aa).

One can recognise a Helicase ATP-binding 1 domain in the interval 495-678 (ETAYNTNENM…FLHVNPYIGL (184 aa)). 508-515 (APTGAGKT) is a binding site for ATP. Positions 620–623 (DEVH) match the DEVH box motif. Residues 717–923 (VLKQIMAGHQ…GTVTNVEEAV (207 aa)) form the Helicase C-terminal 1 domain. The SEC63 1 domain maps to 987-1296 (STDLGRTASH…GAEAVCIINF (310 aa)). The 176-residue stretch at 1345 to 1520 (HTLYHTDCNV…WLNINQMGLF (176 aa)) folds into the Helicase ATP-binding 2 domain. 1358 to 1365 (APTGSGKT) contacts ATP. The short motif at 1462–1465 (DEIH) is the DEIH box element. The 208-residue stretch at 1553-1760 (PAFQAIRSHS…GTITSKQDAM (208 aa)) folds into the Helicase C-terminal 2 domain. The region spanning 1821 to 2184 (PLTYGRIASY…YLGMDQQYDI (364 aa)) is the SEC63 2 domain.

It belongs to the helicase family.

It is found in the nucleus. The protein resides in the nucleus speckle. Its subcellular location is the cytoplasm. The protein localises to the cytosol. The catalysed reaction is Couples ATP hydrolysis with the unwinding of duplex DNA by translocating in the 3'-5' direction.. It carries out the reaction ATP + H2O = ADP + phosphate + H(+). In terms of biological role, 3'-5' DNA helicase involved in repair of alkylated DNA. Promotes DNA unwinding to generate single-stranded substrate needed for ALKBH3, enabling ALKBH3 to process alkylated N3-methylcytosine (3mC) within double-stranded regions. Also involved in activation of the ribosome quality control (RQC) pathway, a pathway that degrades nascent peptide chains during problematic translation. Drives the splitting of stalled ribosomes. The sequence is that of Activating signal cointegrator 1 complex subunit 3 (ascc3) from Gallus gallus (Chicken).